The sequence spans 542 residues: GMP synthase [glutamine-hydrolyzing] (542 aa).

Residues 28-218 enclose the Glutamine amidotransferase type-1 domain; it reads MLVILDFGSQ…VYHICQCEPT (191 aa). The active-site Nucleophile is the Cys105. Residues His192 and Glu194 contribute to the active site. The region spanning 219–417 is the GMPS ATP-PPase domain; that stretch reads WTTEAFVEES…IGLPEEIVRR (199 aa). ATP is bound at residue 246 to 252; that stretch reads SGGVDSS.

Homodimer.

The catalysed reaction is XMP + L-glutamine + ATP + H2O = GMP + L-glutamate + AMP + diphosphate + 2 H(+). Its pathway is purine metabolism; GMP biosynthesis; GMP from XMP (L-Gln route): step 1/1. Catalyzes the synthesis of GMP from XMP. The chain is GMP synthase [glutamine-hydrolyzing] from Rippkaea orientalis (strain PCC 8801 / RF-1) (Cyanothece sp. (strain PCC 8801)).